The chain runs to 859 residues: Envelope glycoprotein (859 aa).

Residues 1-6 (MVSIAF) constitute a propeptide that is removed on maturation. The Extracellular segment spans residues 7–614 (YGGIPGGIST…KDLWSHIGNW (608 aa)). N-linked (GlcNAc...) asparagine; by host glycosylation is found at asparagine 40, asparagine 112, asparagine 141, asparagine 148, asparagine 186, asparagine 214, asparagine 233, asparagine 244, asparagine 340, asparagine 368, asparagine 399, asparagine 406, and asparagine 411. The fusion peptide stretch occupies residues 446–466 (FGISAIVAAIVAATAIAASAT). Asparagine 483 and asparagine 490 each carry an N-linked (GlcNAc...) asparagine; by host glycan. Residues 498–513 (LIERQIKILYAMILQT) form an immunosuppression region. N-linked (GlcNAc...) asparagine; by host glycans are attached at residues asparagine 550 and asparagine 557. Coiled coils occupy residues 576–624 (ILTT…SIIK) and 663–699 (KKFH…YYKQ). The helical transmembrane segment at 615 to 635 (IPGLGASIIKYIVMFLLIYLL) threads the bilayer. The Cytoplasmic segment spans residues 636–859 (LTSSPKILRA…TSHVSMPQYV (224 aa)).

As to quaternary structure, the mature envelope protein (Env) consists of a trimer of SU-TM heterodimers attached by noncovalent interactions or by a labile interchain disulfide bond. In terms of processing, specific enzymatic cleavages in vivo yield mature proteins. Envelope glycoproteins are synthesized as an inactive precursor that is N-glycosylated and processed likely by host cell furin or by a furin-like protease in the Golgi to yield the mature SU and TM proteins. The cleavage site between SU and TM requires the minimal sequence [KR]-X-[KR]-R.

Its subcellular location is the virion membrane. It is found in the host cell membrane. Its function is as follows. The surface protein (SU) attaches the virus to the host cell by binding to its receptor. This interaction triggers the refolding of the transmembrane protein (TM) and is thought to activate its fusogenic potential by unmasking its fusion peptide. Fusion occurs at the host cell plasma membrane. In terms of biological role, the transmembrane protein (TM) acts as a class I viral fusion protein. Under the current model, the protein has at least 3 conformational states: pre-fusion native state, pre-hairpin intermediate state, and post-fusion hairpin state. During viral and target cell membrane fusion, the coiled coil regions (heptad repeats) assume a trimer-of-hairpins structure, positioning the fusion peptide in close proximity to the C-terminal region of the ectodomain. The formation of this structure appears to drive apposition and subsequent fusion of viral and target cell membranes. Membranes fusion leads to delivery of the nucleocapsid into the cytoplasm. This is Envelope glycoprotein (env) from Equus asinus (Donkey).